The primary structure comprises 969 residues: RNA polymerase-associated protein RapA (969 aa).

In terms of domain architecture, Helicase ATP-binding spans 162–339; that stretch reads EVGQRVAPRV…FARLALLDAD (178 aa). Residue 175-182 coordinates ATP; that stretch reads DEVGLGKT. The DEAH box signature appears at 285-288; the sequence is DEAH. In terms of domain architecture, Helicase C-terminal spans 492–663; it reads RIEWLITFLK…IFLKNPQAVG (172 aa).

It belongs to the SNF2/RAD54 helicase family. RapA subfamily. As to quaternary structure, interacts with the RNAP. Has a higher affinity for the core RNAP than for the holoenzyme. Its ATPase activity is stimulated by binding to RNAP.

Its function is as follows. Transcription regulator that activates transcription by stimulating RNA polymerase (RNAP) recycling in case of stress conditions such as supercoiled DNA or high salt concentrations. Probably acts by releasing the RNAP, when it is trapped or immobilized on tightly supercoiled DNA. Does not activate transcription on linear DNA. Probably not involved in DNA repair. The chain is RNA polymerase-associated protein RapA from Actinobacillus pleuropneumoniae serotype 3 (strain JL03).